The sequence spans 207 residues: Protein Nef (207 aa).

Residue Gly2 is the site of N-myristoyl glycine; by host attachment. Ser6 is modified (phosphoserine; by host). Residues 62–66 (EEEEE) are acidic; interacts with host PACS1 and PACS2; stabilizes the interaction of NEF/MHC-I with host AP1M1; necessary for MHC-I internalization. An SH3-binding; interaction with Src family tyrosine kinases region spans residues 70 to 79 (PVRPQVPLRP). The PxxP; stabilizes the interaction of NEF/MHC-I with host AP1M1; necessary for MHC-I internalization motif lies at 73-76 (PQVP). The mediates dimerization, Nef-PTE1 interaction stretch occupies residues 109–125 (EILDLWVYNTQGFFPDW). The interval 149–181 (VDPSEVEEINEGENNCLLHPASLHGMEDEDREV) is binding to ATP6V1H. The Dileucine internalization motif; necessary for CD4 internalization signature appears at 165 to 166 (LL). Positions 175–176 (ED) match the Diacidic; necessary for CD4 internalization motif.

Belongs to the lentivirus primate group Nef protein family. In terms of assembly, monomer; cytosolic form. Homodimer; membrane bound form. Interacts with Nef associated p21-activated kinase (PAK2); this interaction activates PAK2. Associates with the Nef-MHC-I-AP1 complex; this complex is required for MHC-I internalization. Interacts (via C-terminus) with host PI3-kinase. Interacts with host PACS1; this interaction seems to be weak. Interacts with host PACS2. Interacts with host LCK and MAPK3; these interactions inhibit the kinase activity of the latter. Interacts with host ATP6V1H; this interaction may play a role in CD4 endocytosis. Associates with the CD4-Nef-AP2 complex; this complex is required for CD4 internalization. Interacts with host AP2 subunit alpha and AP2 subunit sigma2. Interacts with TCR-zeta chain; this interaction up-regulates the Fas ligand (FasL) surface expression. Interacts with host HCK, LYN, and SRC; these interactions activate the Src family kinases. Interacts with MAP3K5; this interaction inhibits the Fas and TNFR-mediated death signals. Interacts with beta-COP and PTE1. Interacts with human RACK1; this increases Nef phosphorylation by PKC. Interacts with TP53; this interaction decreases the half-life of TP53, protecting the infected cell against p53-mediated apoptosis. In terms of processing, the virion-associated Nef proteins are cleaved by the viral protease to release the soluble C-terminal core protein. Nef is probably cleaved concomitantly with viral structural proteins on maturation of virus particles. Post-translationally, myristoylated. Phosphorylated on serine residues, probably by host PKCdelta and theta.

The protein localises to the host cell membrane. It is found in the virion. Its subcellular location is the secreted. The protein resides in the host Golgi apparatus membrane. Its function is as follows. Factor of infectivity and pathogenicity, required for optimal virus replication. Alters numerous pathways of T-lymphocyte function and down-regulates immunity surface molecules in order to evade host defense and increase viral infectivity. Alters the functionality of other immunity cells, like dendritic cells, monocytes/macrophages and NK cells. Functionally, in infected CD4(+) T-lymphocytes, down-regulates the surface MHC-I, mature MHC-II, CD4, CD28, CCR5 and CXCR4 molecules. Mediates internalization and degradation of host CD4 through the interaction of with the cytoplasmic tail of CD4, the recruitment of AP-2 (clathrin adapter protein complex 2), internalization through clathrin coated pits, and subsequent transport to endosomes and lysosomes for degradation. Diverts host MHC-I molecules to the trans-Golgi network-associated endosomal compartments by an endocytic pathway to finally target them for degradation. MHC-I down-regulation may involve AP-1 (clathrin adapter protein complex 1) or possibly Src family kinase-ZAP70/Syk-PI3K cascade recruited by PACS2. In consequence infected cells are masked for immune recognition by cytotoxic T-lymphocytes. Decreasing the number of immune receptors also prevents reinfection by more HIV particles (superinfection). Down-regulates host SERINC3 and SERINC5 thereby excluding these proteins from the viral particles. Virion infectivity is drastically higher when SERINC3 or SERINC5 are excluded from the viral envelope, because these host antiviral proteins impair the membrane fusion event necessary for subsequent virion penetration. In terms of biological role, bypasses host T-cell signaling by inducing a transcriptional program nearly identical to that of anti-CD3 cell activation. Interaction with TCR-zeta chain up-regulates the Fas ligand (FasL). Increasing surface FasL molecules and decreasing surface MHC-I molecules on infected CD4(+) cells send attacking cytotoxic CD8+ T-lymphocytes into apoptosis. Plays a role in optimizing the host cell environment for viral replication without causing cell death by apoptosis. Protects the infected cells from apoptosis in order to keep them alive until the next virus generation is ready to strike. Inhibits the Fas and TNFR-mediated death signals by blocking MAP3K5/ASK1. Decreases the half-life of TP53, protecting the infected cell against p53-mediated apoptosis. Inhibits the apoptotic signals regulated by the Bcl-2 family proteins through the formation of a Nef/PI3-kinase/PAK2 complex that leads to activation of PAK2 and induces phosphorylation of host BAD. Its function is as follows. Extracellular Nef protein targets CD4(+) T-lymphocytes for apoptosis by interacting with CXCR4 surface receptors. This Homo sapiens (Human) protein is Protein Nef.